Here is a 381-residue protein sequence, read N- to C-terminus: Glucose-1-phosphate adenylyltransferase (381 aa).

Residues Y100, G165, 180–181, and S191 each bind alpha-D-glucose 1-phosphate; that span reads EK.

This sequence belongs to the bacterial/plant glucose-1-phosphate adenylyltransferase family. Homotetramer.

The enzyme catalyses alpha-D-glucose 1-phosphate + ATP + H(+) = ADP-alpha-D-glucose + diphosphate. Its pathway is glycan biosynthesis; glycogen biosynthesis. In terms of biological role, involved in the biosynthesis of ADP-glucose, a building block required for the elongation reactions to produce glycogen. Catalyzes the reaction between ATP and alpha-D-glucose 1-phosphate (G1P) to produce pyrophosphate and ADP-Glc. In Mycoplasma mobile (strain ATCC 43663 / 163K / NCTC 11711) (Mesomycoplasma mobile), this protein is Glucose-1-phosphate adenylyltransferase.